The sequence spans 276 residues: MRNIGIIINKEKDKENEILNLVILKVKEYLNPDEIKVIDQFYKGDYKDLMALDLLIVLGGDGTLLGVARKFSTVIDTPILGINIGNLGFLVTAEISELDEALYRIKVGDYKVEERMLLSCTIEGVTCSEERALNDIVVARGTLSRMAQYEVFINDELYATFKGDGVIISTPVGSTAYSFSAGGPLIMPDLQIVSIVPICPHTPNSRPMIIDGNNKVRVKPLINESDVFVTIDGQKALKLEKHNEVLIKKAKEFFRIISFDNKSYFKVLRKKLFKIE.

Residue D61 is the Proton acceptor of the active site. Residues 61 to 62 (DG), 134 to 135 (ND), R145, K162, D164, V172, 175 to 180 (TAYSFS), and Q234 each bind NAD(+).

Belongs to the NAD kinase family. The cofactor is a divalent metal cation.

It is found in the cytoplasm. The enzyme catalyses NAD(+) + ATP = ADP + NADP(+) + H(+). Its function is as follows. Involved in the regulation of the intracellular balance of NAD and NADP, and is a key enzyme in the biosynthesis of NADP. Catalyzes specifically the phosphorylation on 2'-hydroxyl of the adenosine moiety of NAD to yield NADP. This chain is NAD kinase, found in Clostridium perfringens (strain ATCC 13124 / DSM 756 / JCM 1290 / NCIMB 6125 / NCTC 8237 / Type A).